The following is a 599-amino-acid chain: Histone-arginine methyltransferase CARMER (599 aa).

Residues 127-434 (ASQYFQFYGY…QRQSYDVEID (308 aa)) enclose the SAM-dependent MTase PRMT-type domain. S-adenosyl-L-methionine-binding residues include glutamine 140, arginine 149, glycine 173, glutamate 195, glutamate 224, and threonine 252. Arginine 487 bears the Asymmetric dimethylarginine; by autocatalysis mark.

This sequence belongs to the class I-like SAM-binding methyltransferase superfamily. Protein arginine N-methyltransferase family. As to quaternary structure, homodimer. The dimethylated protein is the major form.

The protein localises to the cytoplasm. Its subcellular location is the nucleus. The enzyme catalyses L-arginyl-[protein] + 2 S-adenosyl-L-methionine = N(omega),N(omega)-dimethyl-L-arginyl-[protein] + 2 S-adenosyl-L-homocysteine + 2 H(+). In terms of biological role, methylates (mono- and asymmetric dimethylation) the guanidino nitrogens of arginyl residues in proteins. May methylate histone H3 at 'Arg-17' and activate transcription via chromatin remodeling. This is Histone-arginine methyltransferase CARMER (Art4) from Culex quinquefasciatus (Southern house mosquito).